The chain runs to 170 residues: uncharacterized protein (170 aa).

A run of 3 helical transmembrane segments spans residues 31-51 (ILAVVNGSITIILSIIVFYIF), 58-78 (LFLITAGILTVFVFLYGLLLF), and 133-153 (IDFIVMIGMITISVIVVMLLF).

This sequence to M.jannaschii MJ0554 and MJ0587.

It is found in the cell membrane. This is an uncharacterized protein from Methanocaldococcus jannaschii (strain ATCC 43067 / DSM 2661 / JAL-1 / JCM 10045 / NBRC 100440) (Methanococcus jannaschii).